We begin with the raw amino-acid sequence, 498 residues long: Glycerol kinase (498 aa).

ADP is bound at residue Thr12. The ATP site is built by Thr12, Thr13, and Ser14. Residue Thr12 participates in sn-glycerol 3-phosphate binding. Arg16 contributes to the ADP binding site. Sn-glycerol 3-phosphate contacts are provided by Arg82, Glu83, and Tyr134. Residues Arg82, Glu83, and Tyr134 each contribute to the glycerol site. Phosphohistidine; by HPr is present on His230. Asp244 lines the sn-glycerol 3-phosphate pocket. Residues Asp244 and Gln245 each coordinate glycerol. 2 residues coordinate ADP: Thr266 and Gly309. Residues Thr266, Gly309, Gln313, and Gly410 each contribute to the ATP site. ADP contacts are provided by Gly410 and Asn414.

The protein belongs to the FGGY kinase family. Homotetramer and homodimer (in equilibrium). The phosphoenolpyruvate-dependent sugar phosphotransferase system (PTS), including enzyme I, and histidine-containing protein (HPr) are required for the phosphorylation, which leads to the activation of the enzyme.

The enzyme catalyses glycerol + ATP = sn-glycerol 3-phosphate + ADP + H(+). Its pathway is polyol metabolism; glycerol degradation via glycerol kinase pathway; sn-glycerol 3-phosphate from glycerol: step 1/1. Its activity is regulated as follows. Activated by phosphorylation and inhibited by fructose 1,6-bisphosphate (FBP). In terms of biological role, key enzyme in the regulation of glycerol uptake and metabolism. Catalyzes the phosphorylation of glycerol to yield sn-glycerol 3-phosphate. In Staphylococcus aureus (strain Mu50 / ATCC 700699), this protein is Glycerol kinase.